A 185-amino-acid polypeptide reads, in one-letter code: Large ribosomal subunit protein uL5 (185 aa).

Belongs to the universal ribosomal protein uL5 family. Part of the 50S ribosomal subunit; part of the 5S rRNA/L5/L18/L25 subcomplex. Contacts the 5S rRNA and the P site tRNA. Forms a bridge to the 30S subunit in the 70S ribosome.

Functionally, this is one of the proteins that bind and probably mediate the attachment of the 5S RNA into the large ribosomal subunit, where it forms part of the central protuberance. In the 70S ribosome it contacts protein S13 of the 30S subunit (bridge B1b), connecting the 2 subunits; this bridge is implicated in subunit movement. Contacts the P site tRNA; the 5S rRNA and some of its associated proteins might help stabilize positioning of ribosome-bound tRNAs. The polypeptide is Large ribosomal subunit protein uL5 (Streptomyces coelicolor (strain ATCC BAA-471 / A3(2) / M145)).